Here is a 343-residue protein sequence, read N- to C-terminus: LRP2-binding protein (343 aa).

One copy of the TPR repeat lies at 58-91; the sequence is SQATFLLGQLHYVQGCYAEAELIFDRIKDKDPQA. Sel1-like repeat units follow at residues 92-124, 132-167, 172-205, 206-241, 242-273, and 293-328; these read LYQL…FWDS, YAAL…DNGN, VKAQ…GNGS, LESQ…ERGS, VYAQ…EYKD, and AIGM…RIDP.

The protein localises to the cytoplasm. In terms of biological role, may act as an adapter that regulates LRP2 function. This Danio rerio (Zebrafish) protein is LRP2-binding protein (lrp2bp).